The primary structure comprises 186 residues: Ribosome-recycling factor (186 aa).

The disordered stretch occupies residues 135–156 (DANDEVKKLQKDKAVSEDEGKK).

It belongs to the RRF family.

The protein resides in the cytoplasm. In terms of biological role, responsible for the release of ribosomes from messenger RNA at the termination of protein biosynthesis. May increase the efficiency of translation by recycling ribosomes from one round of translation to another. The polypeptide is Ribosome-recycling factor (Bdellovibrio bacteriovorus (strain ATCC 15356 / DSM 50701 / NCIMB 9529 / HD100)).